A 754-amino-acid chain; its full sequence is 5-methyltetrahydropteroyltriglutamate--homocysteine methyltransferase (754 aa).

Residues 15–18 and Lys114 contribute to the 5-methyltetrahydropteroyltri-L-glutamate site; that span reads RELK. L-homocysteine-binding positions include 430–432 and Glu483; that span reads IGS. L-methionine is bound by residues 430 to 432 and Glu483; that span reads IGS. 5-methyltetrahydropteroyltri-L-glutamate is bound by residues 514 to 515 and Trp560; that span reads RC. An L-homocysteine-binding site is contributed by Asp598. Residue Asp598 participates in L-methionine binding. Glu604 provides a ligand contact to 5-methyltetrahydropteroyltri-L-glutamate. Positions 641, 643, and 665 each coordinate Zn(2+). Catalysis depends on His694, which acts as the Proton donor. Cys726 is a binding site for Zn(2+).

The protein belongs to the vitamin-B12 independent methionine synthase family. The cofactor is Zn(2+).

It catalyses the reaction 5-methyltetrahydropteroyltri-L-glutamate + L-homocysteine = tetrahydropteroyltri-L-glutamate + L-methionine. Its pathway is amino-acid biosynthesis; L-methionine biosynthesis via de novo pathway; L-methionine from L-homocysteine (MetE route): step 1/1. Its function is as follows. Catalyzes the transfer of a methyl group from 5-methyltetrahydrofolate to homocysteine resulting in methionine formation. The chain is 5-methyltetrahydropteroyltriglutamate--homocysteine methyltransferase from Campylobacter jejuni subsp. jejuni serotype O:23/36 (strain 81-176).